A 1135-amino-acid polypeptide reads, in one-letter code: Vinculin (1135 aa).

The N-terminal globular head stretch occupies residues 2 to 835 (PVFHTRTIES…GAVAKVREAF (834 aa)). Phosphotyrosine is present on tyrosine 100. Positions 168 to 208 (MTKMAKMIDERQQELTHQEHRVMLVNSMNTVKELLPVLISA) are talin-interaction. Tandem repeats lie at residues 259 to 369 (ASKD…KVEN), 370 to 479 (AARK…KTNR), and 480 to 589 (AVAN…RMQE). The tract at residues 259–589 (ASKDTEAMKR…LKDLKARMQE (331 aa)) is 3 X 112 AA tandem repeats. Phosphotyrosine is present on residues tyrosine 537 and tyrosine 822. The interval 836–878 (QPQEPDFPPPPPDLEHLHLTDELAPPKPPLPEGEVPPPRPPPP) is linker (Pro-rich). Residues 837–888 (PQEPDFPPPPPDLEHLHLTDELAPPKPPLPEGEVPPPRPPPPEEKDEEFPEQ) are disordered. The span at 860 to 876 (PPKPPLPEGEVPPPRPP) shows a compositional bias: pro residues. The C-terminal tail stretch occupies residues 879-1135 (EEKDEEFPEQ…RWVRKTPWYQ (257 aa)). Facilitates phospholipid membrane insertion regions lie at residues 1004–1047 (RLVR…KRIR) and 1121–1135 (AGFT…PWYQ). At tyrosine 1134 the chain carries Phosphotyrosine; by SRC-type Tyr-kinases.

Belongs to the vinculin/alpha-catenin family. Exhibits self-association properties. Interacts with APBB1IP, NRAP and TLN1. Interacts with CTNNB1 and this interaction is necessary for its localization to the cell-cell junctions and for its function in regulating cell surface expression of E-cadherin. Post-translationally, phosphorylated; on serines, threonines and tyrosines. Phosphorylation on Tyr-1134 in activated platelets affects head-tail interactions and cell spreading but has no effect on actin binding nor on localization to focal adhesion plaques. In terms of processing, acetylated; mainly by myristic acid but also by a small amount of palmitic acid. As to expression, isoform Metavinculin is muscle-specific.

Its subcellular location is the cell membrane. The protein localises to the cell junction. It localises to the adherens junction. The protein resides in the focal adhesion. It is found in the cytoplasm. Its subcellular location is the cytoskeleton. The protein localises to the sarcolemma. It localises to the cell projection. The protein resides in the podosome. Functionally, actin filament (F-actin)-binding protein involved in cell-matrix adhesion and cell-cell adhesion. Regulates cell-surface E-cadherin expression and potentiates mechanosensing by the E-cadherin complex. May also play important roles in cell morphology and locomotion. The polypeptide is Vinculin (VCL) (Gallus gallus (Chicken)).